A 606-amino-acid polypeptide reads, in one-letter code: Acetylcholinesterase (606 aa).

A signal peptide spans 1–28; sequence MPSCQPGKMPAPWPWWLQLLLCIPSCVA. A disulfide bond links Cys-98 and Cys-125. The active-site Acyl-ester intermediate is the Ser-231. A disulfide bridge connects residues Cys-285 and Cys-296. An N-linked (GlcNAc...) asparagine glycan is attached at Asn-289. Glu-358 serves as the catalytic Charge relay system. N-linked (GlcNAc...) asparagine glycosylation occurs at Asn-374. Cys-433 and Cys-552 are joined by a disulfide. The active-site Charge relay system is the His-471. The N-linked (GlcNAc...) asparagine glycan is linked to Asn-484.

It belongs to the type-B carboxylesterase/lipase family. Isoform S is monomeric. Isoform T can form oligomers, including collagen-tailed forms. In terms of processing, the N-terminus is blocked. Liver and muscle contain both isoform T and isoform S. Venom gland predominantly contains isoform S.

The protein localises to the synapse. Its subcellular location is the secreted. The protein resides in the cell membrane. The catalysed reaction is acetylcholine + H2O = choline + acetate + H(+). With respect to regulation, inhibited by active site inhibitors: edrophonium, trimethyl-(m-acetamidopheny1)-ammonium iodide, and trimethyl-(p-acetarnidopheny1)-ammonium iodide. Inhibited by both active and peripheral site inhibitors: decamethonium, and BW284c51. Inhibited by peripheral site inhibitors: snake acetylcholinesterase fasciculin-2, propidium, gallamine, D-tubocurarine, and tacrine. Also inhibited by antibodies Elec410 and Fab410. In muscle, it terminates signal transduction at the neuromuscular junction by rapid hydrolysis of the acetylcholine released into the synaptic cleft. In liver, its function is unclear: it could serve as a safeguard against any diffusion of acetylcholine from synapses into the circulation. In venom, its toxic role is unclear: it could result in less musculatory control by rapidly hydrolyzing acetylcholine, or that it works synergistically with alkaline phosphatase (ALP) in paralyzing prey through hypotension. The protein is Acetylcholinesterase (ACHE) of Bungarus fasciatus (Banded krait).